The following is a 230-amino-acid chain: uncharacterized protein (230 aa).

7 helical membrane-spanning segments follow: residues 34–54, 56–76, 87–107, 111–131, 146–166, 167–187, and 205–225; these read FFAG…MNFQ, VVQY…GLMF, MLFA…GMVI, GLGA…LMSV, MLFI…FLGS, PMFQ…YIAY, and VSLY…IGIF.

Belongs to the BI1 family.

The protein resides in the cell membrane. This is an uncharacterized protein from Helicobacter pylori (strain ATCC 700392 / 26695) (Campylobacter pylori).